Reading from the N-terminus, the 137-residue chain is Large ribosomal subunit protein uL16 (137 aa).

Belongs to the universal ribosomal protein uL16 family. In terms of assembly, part of the 50S ribosomal subunit.

In terms of biological role, binds 23S rRNA and is also seen to make contacts with the A and possibly P site tRNAs. The protein is Large ribosomal subunit protein uL16 of Bartonella henselae (strain ATCC 49882 / DSM 28221 / CCUG 30454 / Houston 1) (Rochalimaea henselae).